The following is a 229-amino-acid chain: Sorting nexin-10A (229 aa).

The PX domain occupies 11-128; it reads FISVWVRDPQ…HLFLQSQLSI (118 aa). 2 residues coordinate a 1,2-diacyl-sn-glycero-3-phospho-(1D-myo-inositol-3-phosphate): R54 and R95.

This sequence belongs to the sorting nexin family.

The protein resides in the cytoplasm. Its subcellular location is the endosome membrane. The protein localises to the cytoskeleton. It localises to the microtubule organizing center. It is found in the centrosome. Its function is as follows. Probable phosphoinositide-binding protein involved in protein sorting and membrane trafficking in endosomes. May play a role in cilium biogenesis through regulation of the transport and the localization of proteins to the cilium. The protein is Sorting nexin-10A (snx10a) of Danio rerio (Zebrafish).